Consider the following 310-residue polypeptide: Glycerol-3-phosphate dehydrogenase [NAD(P)+] (310 aa).

W14, R34, R35, and K82 together coordinate NADPH. The sn-glycerol 3-phosphate site is built by K82 and G110. S114 contributes to the NADPH binding site. Residues K165, D218, S228, R229, and N230 each coordinate sn-glycerol 3-phosphate. K165 acts as the Proton acceptor in catalysis. R229 contacts NADPH. E255 is a binding site for NADPH.

This sequence belongs to the NAD-dependent glycerol-3-phosphate dehydrogenase family.

It localises to the cytoplasm. It catalyses the reaction sn-glycerol 3-phosphate + NAD(+) = dihydroxyacetone phosphate + NADH + H(+). It carries out the reaction sn-glycerol 3-phosphate + NADP(+) = dihydroxyacetone phosphate + NADPH + H(+). It functions in the pathway membrane lipid metabolism; glycerophospholipid metabolism. Functionally, catalyzes the reduction of the glycolytic intermediate dihydroxyacetone phosphate (DHAP) to sn-glycerol 3-phosphate (G3P), the key precursor for phospholipid synthesis. The polypeptide is Glycerol-3-phosphate dehydrogenase [NAD(P)+] (Acaryochloris marina (strain MBIC 11017)).